The sequence spans 657 residues: Tetracycline resistance protein TetQ (657 aa).

Residues 17–260 enclose the tr-type G domain; that stretch reads MNIINLGILA…AISSFILPPE (244 aa). GTP contacts are provided by residues 26–33, 90–94, and 144–147; these read AHIDAGKT, DTPGH, and NKID.

It belongs to the TRAFAC class translation factor GTPase superfamily. Classic translation factor GTPase family. TetM/TetO subfamily.

Abolishes the inhibitory effect of tetracycline on protein synthesis by non-covalently modifying ribosomes. Confers mild resistance to tetracycline when expressed in E.coli. This Bacteroides fragilis protein is Tetracycline resistance protein TetQ (tetQ).